The following is a 288-amino-acid chain: Oxaloacetate decarboxylase (288 aa).

A substrate-binding site is contributed by Ser-47. Asp-85 lines the Mg(2+) pocket. Substrate contacts are provided by Arg-156 and His-232.

It belongs to the isocitrate lyase/PEP mutase superfamily. Oxaloacetate decarboxylase family. As to quaternary structure, homotetramer; dimer of dimers. Requires Mg(2+) as cofactor.

The enzyme catalyses oxaloacetate + H(+) = pyruvate + CO2. Its function is as follows. Catalyzes the decarboxylation of oxaloacetate into pyruvate. Seems to play a role in maintaining cellular concentrations of bicarbonate and pyruvate. The protein is Oxaloacetate decarboxylase of Rhodopseudomonas palustris (strain ATCC BAA-98 / CGA009).